The chain runs to 209 residues: Regulator of G-protein signaling 1 (209 aa).

Residues 18-42 (FFSASPKDSKEPSHSLLDDNKQKKR) are disordered. A compositionally biased stretch (basic and acidic residues) spans 24–38 (KDSKEPSHSLLDDNK). Residues 85 to 200 (SLEKLLANQM…LKSNIYLNLL (116 aa)) form the RGS domain.

In terms of assembly, interacts with GNAI1 and GNAQ. In terms of tissue distribution, expressed in multiple tissues.

Its subcellular location is the cell membrane. It is found in the cytoplasm. The protein resides in the cytosol. In terms of biological role, regulates G protein-coupled receptor signaling cascades, including signaling downstream of the N-formylpeptide chemoattractant receptors and leukotriene receptors. Inhibits B cell chemotaxis toward CXCL12. Inhibits signal transduction by increasing the GTPase activity of G protein alpha subunits, thereby driving them into their inactive GDP-bound form. The sequence is that of Regulator of G-protein signaling 1 (Rgs1) from Rattus norvegicus (Rat).